The primary structure comprises 188 residues: UPF0301 protein PsycPRwf_0144 (188 aa).

It belongs to the UPF0301 (AlgH) family.

This Psychrobacter sp. (strain PRwf-1) protein is UPF0301 protein PsycPRwf_0144.